Consider the following 225-residue polypeptide: Pre-mRNA-splicing factor SPF27 (225 aa).

Residue alanine 2 is modified to N-acetylalanine. At serine 94 the chain carries Phosphoserine. Residues tyrosine 138–arginine 222 adopt a coiled-coil conformation.

The protein belongs to the SPF27 family. In terms of assembly, component of the pre-catalytic and catalytic spliceosome complexes. Component of the postcatalytic spliceosome P complex. Component of the PRP19-CDC5L splicing complex composed of a core complex comprising a homotetramer of PRPF19, CDC5L, PLRG1 and BCAS2, and at least three less stably associated proteins CTNNBL1, CWC15 and HSPA8. Interacts directly in the complex with PRPF19, CDC5L and PLRG1. As to expression, ubiquitously expressed.

It localises to the nucleus. The protein localises to the nucleolus. Required for pre-mRNA splicing as component of the activated spliceosome. Component of the PRP19-CDC5L complex that forms an integral part of the spliceosome and is required for activating pre-mRNA splicing. May have a scaffolding role in the spliceosome assembly as it contacts all other components of the core complex. The PRP19-CDC5L complex may also play a role in the response to DNA damage (DDR). In Homo sapiens (Human), this protein is Pre-mRNA-splicing factor SPF27 (BCAS2).